A 540-amino-acid chain; its full sequence is CUB domain-containing protein 2 (540 aa).

Residues 1–24 form the signal peptide; the sequence is MLAELGACLLLAMVLLDSDPGTQA. Over 25–516 the chain is Extracellular; sequence MEGVKCGGVL…GTMVTQDTSD (492 aa). 6 disulfide bridges follow: Cys30–Cys56, Cys83–Cys106, Cys145–Cys171, Cys198–Cys218, Cys257–Cys283, and Cys314–Cys336. 3 consecutive CUB domains span residues 30–143, 145–255, and 257–373; these read CGGV…YQKD, CGGV…YFSG, and CQEV…YIGV. N-linked (GlcNAc...) asparagine glycosylation is present at Asn40. N-linked (GlcNAc...) asparagine glycosylation occurs at Asn267. Residues Asn377, Asn435, and Asn436 are each glycosylated (N-linked (GlcNAc...) asparagine). A helical membrane pass occupies residues 517–537; it reads IVFLGLCILAGVLMIIAIVVL. At 538–540 the chain is on the cytoplasmic side; sequence MLL.

The protein resides in the membrane. This Mus musculus (Mouse) protein is CUB domain-containing protein 2 (Cdcp2).